The primary structure comprises 146 residues: Transcriptional repressor NrdR (146 aa).

A zinc finger lies at 3-34; it reads CPFCQNPDTKVIDTRISDDGHSIRRRRVCPKC. Positions 46 to 136 constitute an ATP-cone domain; the sequence is LLVTKRSGGV…VYQNFAGLED (91 aa).

This sequence belongs to the NrdR family. The cofactor is Zn(2+).

Functionally, negatively regulates transcription of bacterial ribonucleotide reductase nrd genes and operons by binding to NrdR-boxes. This is Transcriptional repressor NrdR from Bifidobacterium longum (strain NCC 2705).